The sequence spans 205 residues: Probable inactive peroxygenase-like protein (205 aa).

The short motif at 79–88 is the Proline-knot element; the sequence is PVQLFGYILP. Ser183 carries the post-translational modification Phosphoserine.

It belongs to the caleosin family.

The protein resides in the lipid droplet. This chain is Probable inactive peroxygenase-like protein, found in Arabidopsis thaliana (Mouse-ear cress).